Reading from the N-terminus, the 117-residue chain is Ig heavy chain V region 102 (117 aa).

An N-terminal signal peptide occupies residues 1 to 19 (MGWSCIILFLVATATGVHS). The segment at 20 to 49 (HVQLQQPGAELVKPGASVKVSCKASGYTFT) is framework-1. Cysteine 41 and cysteine 115 form a disulfide bridge. The interval 50-54 (SYWMH) is complementarity-determining-1. The tract at residues 55–68 (WVKQRPGQGLEWIG) is framework-2. The interval 69-85 (RIHPSDSDTNYNQKFKG) is complementarity-determining-2. The segment at 86–117 (KATLTVDKSSSTAYMQLSSLTSEDSAVYYCAI) is framework-3.

In Mus musculus (Mouse), this protein is Ig heavy chain V region 102.